The primary structure comprises 98 residues: NADH-ubiquinone oxidoreductase chain 4L (98 aa).

3 consecutive transmembrane segments (helical) span residues 1 to 21 (MSMV…GLLV), 30 to 50 (LLCL…TILI), and 61 to 81 (IILL…LVMV).

The protein belongs to the complex I subunit 4L family. Core subunit of respiratory chain NADH dehydrogenase (Complex I) which is composed of 45 different subunits.

The protein resides in the mitochondrion inner membrane. It catalyses the reaction a ubiquinone + NADH + 5 H(+)(in) = a ubiquinol + NAD(+) + 4 H(+)(out). Its function is as follows. Core subunit of the mitochondrial membrane respiratory chain NADH dehydrogenase (Complex I) which catalyzes electron transfer from NADH through the respiratory chain, using ubiquinone as an electron acceptor. Part of the enzyme membrane arm which is embedded in the lipid bilayer and involved in proton translocation. In Pagophilus groenlandicus (Harp seal), this protein is NADH-ubiquinone oxidoreductase chain 4L (MT-ND4L).